Consider the following 446-residue polypeptide: MNKSPRRYHITTFGCQMNKADSERMAGILEDLGFQWSEDANEADLILYNTCTIRDNAEQKVYSYLGRQAKRKQTQPDLTLIVAGCVAQQEGEQLLRRVPEVDLIIGPQHANRLGDLLQQVFDGSQVVATEPIHIMEDITKPRRDSNITAWVNVIYGCNERCTYCVVPGVRGVEQSRTPAAIRAEMAQLGQQGYQEITLLGQNIDAYGRDLPGVTASGRHLHNFTDLLYYVHDVAGIERLRFATSHPRYFTERLIKACQELPKVCEHFHIPFQSGDNDILKAMKRGYTQEKYRQIIANIRDLMPDAAISADAIVGFPGETEAQFENTLKLVDEIGFDQLNTAAYSPRPGTPAAIWDDQLSEQVKSDRLQRLNHLVATKAAERSQRYLGRIEEILVEDVNPKDASQVMGRTRGNRLTFFTGDIEELRGKFVKVKITEVRPFSLTGVIF.

The region spanning 6-122 is the MTTase N-terminal domain; sequence RRYHITTFGC…LGDLLQQVFD (117 aa). [4Fe-4S] cluster is bound by residues Cys15, Cys51, Cys85, Cys157, Cys161, and Cys164. The Radical SAM core domain occupies 143 to 380; it reads RDSNITAWVN…NHLVATKAAE (238 aa). The TRAM domain occupies 383–446; it reads QRYLGRIEEI…RPFSLTGVIF (64 aa).

Belongs to the methylthiotransferase family. MiaB subfamily. As to quaternary structure, monomer. Requires [4Fe-4S] cluster as cofactor.

The protein localises to the cytoplasm. It catalyses the reaction N(6)-dimethylallyladenosine(37) in tRNA + (sulfur carrier)-SH + AH2 + 2 S-adenosyl-L-methionine = 2-methylsulfanyl-N(6)-dimethylallyladenosine(37) in tRNA + (sulfur carrier)-H + 5'-deoxyadenosine + L-methionine + A + S-adenosyl-L-homocysteine + 2 H(+). In terms of biological role, catalyzes the methylthiolation of N6-(dimethylallyl)adenosine (i(6)A), leading to the formation of 2-methylthio-N6-(dimethylallyl)adenosine (ms(2)i(6)A) at position 37 in tRNAs that read codons beginning with uridine. The sequence is that of tRNA-2-methylthio-N(6)-dimethylallyladenosine synthase from Microcystis aeruginosa (strain NIES-843 / IAM M-2473).